Reading from the N-terminus, the 451-residue chain is UDP-N-acetylmuramoylalanine--D-glutamate ligase (451 aa).

119 to 125 (GSNGKTT) provides a ligand contact to ATP.

Belongs to the MurCDEF family.

Its subcellular location is the cytoplasm. The enzyme catalyses UDP-N-acetyl-alpha-D-muramoyl-L-alanine + D-glutamate + ATP = UDP-N-acetyl-alpha-D-muramoyl-L-alanyl-D-glutamate + ADP + phosphate + H(+). Its pathway is cell wall biogenesis; peptidoglycan biosynthesis. In terms of biological role, cell wall formation. Catalyzes the addition of glutamate to the nucleotide precursor UDP-N-acetylmuramoyl-L-alanine (UMA). The chain is UDP-N-acetylmuramoylalanine--D-glutamate ligase from Bacillus cytotoxicus (strain DSM 22905 / CIP 110041 / 391-98 / NVH 391-98).